A 145-amino-acid polypeptide reads, in one-letter code: uncharacterized protein (145 aa).

A helical membrane pass occupies residues 104–124 (IEVIILSHHFVIGFSFLLGLL).

It is found in the membrane. This is an uncharacterized protein from Saccharomyces cerevisiae (strain ATCC 204508 / S288c) (Baker's yeast).